The primary structure comprises 502 residues: Arginine-specific demethylase JMJ22 (502 aa).

The segment at 15–45 (KSKSKRLKLHQHEPESLFPEKEVEEEDEDEG) is disordered. Residues 24-35 (HQHEPESLFPEK) are compositionally biased toward basic and acidic residues. The F-box domain occupies 80-126 (LGNLQILSDELVLDILGLLGANHLGVLATVTKSFYIFANHEPLWRNL). A JmjC domain is found at 279-439 (EKVPVLDSEY…NVLEFLKKPN (161 aa)). 3 residues coordinate Fe cation: His324, Asp326, and His407.

It belongs to the JARID1 histone demethylase family. It depends on Fe(2+) as a cofactor. As to expression, expressed in inflorescences, roots and siliques, and, at low levels, in leaves and stems.

Its subcellular location is the nucleus. The enzyme catalyses N(omega),N(omega)-dimethyl-L-arginyl-[protein] + 2-oxoglutarate + O2 = N(omega)-methyl-L-arginyl-[protein] + formaldehyde + succinate + CO2. Its function is as follows. Histone demethylase that demethylates 'Arg-3' (H4R3me) of histone H4 with a specific activity for H4R3me2. Involved in the positive regulation of gene expression. Together with JMJ20, positively regulates seed germination by promoting the removal of repressive histone arginine methylations (e.g. H4R3me2) at GA3ox1 and GA3ox2 to trigger gibberellic acid (GA) biosynthesis. This is Arginine-specific demethylase JMJ22 from Arabidopsis thaliana (Mouse-ear cress).